A 181-amino-acid polypeptide reads, in one-letter code: Probable N-acetyltransferase YjcK (181 aa).

The N-acetyltransferase domain maps to 7-172 (IYVRPLEVTD…NGVWEDHQVL (166 aa)).

Belongs to the acetyltransferase family. RimJ subfamily.

The enzyme catalyses an N-terminal L-alpha-aminoacyl-[protein] + acetyl-CoA = N-terminal N(alpha)-acetyl-L-alpha-aminoacyl-[protein] + CoA + H(+). Probable N-terminal protein acetyltransferase. The polypeptide is Probable N-acetyltransferase YjcK (yjcK) (Bacillus subtilis (strain 168)).